An 84-amino-acid chain; its full sequence is Large ribosomal subunit protein bL27 (84 aa).

The tract at residues 1–20 is disordered; sequence MAHKKAGGSTRNGRDSNPKY.

Belongs to the bacterial ribosomal protein bL27 family.

The protein is Large ribosomal subunit protein bL27 of Francisella tularensis subsp. tularensis (strain FSC 198).